The sequence spans 453 residues: MTVETGIVVGASVSHSHASIDQIETAADGSQQTAVEELLSKEGVSEAFVLQTCNRAEAYVVANDSETGTAALAGYLAGVDDDAIRMLSHNQSLKHLMAVACGLESLVIGEDQILGQVRDAYEDARGVGGVGPTLNDAVLKALHVGERARTETAINEGAVSLGSAAVRFAAERHGVTGSTALVVGAGEMATLAAKALDDPASRVIVANRTRERAERLAEELSTTASVVGVDSVDEAADAADVVVSATGSEDYVIDTADLGGVGETCVLDIAQPRDVAPGADGIDGVAVYDLDTIESVTDEARAKRREAAETVETMIDEEFEHLMTQYKRKRADQVIAAMYEGAERIKARELRTAVSKFEAEREDGLSEREHEIVESMADALVGQLLSAPTQSLRDAAEEDDWATINAALQLFGPGLEPEPTELPTVPDGPEGVPEELRERMSSGMLEQFSTNDD.

Residues 52–55, S105, 110–112, and Q116 each bind substrate; these read TCNR and EDQ. C53 functions as the Nucleophile in the catalytic mechanism. 184–189 lines the NADP(+) pocket; that stretch reads GAGEMA. The segment covering 413-424 has biased composition (low complexity); it reads PGLEPEPTELPT. Residues 413–453 are disordered; sequence PGLEPEPTELPTVPDGPEGVPEELRERMSSGMLEQFSTNDD.

This sequence belongs to the glutamyl-tRNA reductase family. As to quaternary structure, homodimer.

The enzyme catalyses (S)-4-amino-5-oxopentanoate + tRNA(Glu) + NADP(+) = L-glutamyl-tRNA(Glu) + NADPH + H(+). It participates in porphyrin-containing compound metabolism; protoporphyrin-IX biosynthesis; 5-aminolevulinate from L-glutamyl-tRNA(Glu): step 1/2. Catalyzes the NADPH-dependent reduction of glutamyl-tRNA(Glu) to glutamate 1-semialdehyde (GSA). This is Glutamyl-tRNA reductase from Natronomonas pharaonis (strain ATCC 35678 / DSM 2160 / CIP 103997 / JCM 8858 / NBRC 14720 / NCIMB 2260 / Gabara) (Halobacterium pharaonis).